The sequence spans 324 residues: Quinolinate synthase 2 (324 aa).

His-48 and Ser-66 together coordinate iminosuccinate. Cys-111 lines the [4Fe-4S] cluster pocket. Residues 137-139 (YVN) and Ser-154 contribute to the iminosuccinate site. Cys-196 serves as a coordination point for [4Fe-4S] cluster. Iminosuccinate is bound by residues 222–224 (HPE) and Thr-239. Position 282 (Cys-282) interacts with [4Fe-4S] cluster.

Belongs to the quinolinate synthase family. Type 2 subfamily. The cofactor is [4Fe-4S] cluster.

It localises to the cytoplasm. It carries out the reaction iminosuccinate + dihydroxyacetone phosphate = quinolinate + phosphate + 2 H2O + H(+). It participates in cofactor biosynthesis; NAD(+) biosynthesis; quinolinate from iminoaspartate: step 1/1. Its function is as follows. Catalyzes the condensation of iminoaspartate with dihydroxyacetone phosphate to form quinolinate. This Mesorhizobium japonicum (strain LMG 29417 / CECT 9101 / MAFF 303099) (Mesorhizobium loti (strain MAFF 303099)) protein is Quinolinate synthase 2.